A 251-amino-acid polypeptide reads, in one-letter code: Hydroxyacylglutathione hydrolase (251 aa).

Residues His-53, His-55, Asp-57, His-58, His-110, Asp-127, and His-165 each coordinate Zn(2+).

The protein belongs to the metallo-beta-lactamase superfamily. Glyoxalase II family. In terms of assembly, monomer. Requires Zn(2+) as cofactor.

The catalysed reaction is an S-(2-hydroxyacyl)glutathione + H2O = a 2-hydroxy carboxylate + glutathione + H(+). It functions in the pathway secondary metabolite metabolism; methylglyoxal degradation; (R)-lactate from methylglyoxal: step 2/2. Its function is as follows. Thiolesterase that catalyzes the hydrolysis of S-D-lactoyl-glutathione to form glutathione and D-lactic acid. This chain is Hydroxyacylglutathione hydrolase, found in Escherichia coli O6:H1 (strain CFT073 / ATCC 700928 / UPEC).